We begin with the raw amino-acid sequence, 468 residues long: Two-component response regulator-like APRR9 (468 aa).

The Response regulatory domain maps to 38 to 156 (RVLLVESDYS…ELKNLWQHVW (119 aa)). Polar residues-rich tracts occupy residues 168 to 177 (HAQSLPASQH) and 194 to 203 (DQGSGAQAIN). Disordered stretches follow at residues 168-203 (HAQS…QAIN), 302-416 (VVAL…SRSQ), and 442-468 (RKKL…STKS). Positions 315–327 (TPTESHEKLRKVT) are enriched in basic and acidic residues. The segment covering 328–364 (SDQGSATTSSNQENIGSSSVSFRNQVLQSTVTNQKQD) has biased composition (polar residues). 2 stretches are compositionally biased toward basic and acidic residues: residues 371-382 (SNREKAASKEVE) and 400-409 (EKPKEEESAK). Residues 417–459 (REAALMKFRLKRKDRCFDKKVRYQSRKKLAEQRPRVKGQFVRT) form the CCT domain. Positions 458–468 (RTVNSDASTKS) are enriched in polar residues.

It belongs to the ARR-like family. In terms of processing, phosphorylated. Phosphorylation varies throughout the diurnal cycle.

It localises to the nucleus. Functionally, transcriptional repressor of CCA1 and LHY, and positive regulator of LWD1 and LWD2 expression. Controls photoperiodic flowering response and temperature compensation. Involved in the positive and negative feedback loops of the circadian clock. Expression of several members of the ARR-like family is controlled by circadian rhythm. Regulated at the transcriptional level by a corepressor complex consisting of ELF4, ELF3, and LUX. APRR9, APRR7, and APRR5 coordinately act on the upstream region of the target genes to repress their expression from noon until midnight. The particular coordinated sequential expression of APRR9, APRR7, APRR5, APRR3 and APPR1 result to circadian waves that may be at the basis of the endogenous circadian clock. The protein is Two-component response regulator-like APRR9 (APRR9) of Arabidopsis thaliana (Mouse-ear cress).